The following is an 89-amino-acid chain: MSLDTTEKQQLINTHQTHGTDTGSAEVQVAMLSERISRLSSHLQNNIHDFSSRQGLLKMIGRRKRLLSYMRNKSEQRYTEIIAKLGIRG.

The tract at residues 1-25 (MSLDTTEKQQLINTHQTHGTDTGSA) is disordered. Over residues 8 to 25 (KQQLINTHQTHGTDTGSA) the composition is skewed to polar residues.

The protein belongs to the universal ribosomal protein uS15 family. Part of the 30S ribosomal subunit. Forms a bridge to the 50S subunit in the 70S ribosome, contacting the 23S rRNA.

In terms of biological role, one of the primary rRNA binding proteins, it binds directly to 16S rRNA where it helps nucleate assembly of the platform of the 30S subunit by binding and bridging several RNA helices of the 16S rRNA. Forms an intersubunit bridge (bridge B4) with the 23S rRNA of the 50S subunit in the ribosome. The sequence is that of Small ribosomal subunit protein uS15 from Parasynechococcus marenigrum (strain WH8102).